Here is a 317-residue protein sequence, read N- to C-terminus: Glutamyl-tRNA reductase-binding protein, chloroplastic (317 aa).

A chloroplast-targeting transit peptide spans 1 to 42 (MQLQTQSFALNLLPSPNFAKPIERREFISLKRDPSRPISLRC).

Interacts with HEMA1 and forms a heterotetramer of two GLUTRBP and two HEMA1 subunits.

Its subcellular location is the plastid. It is found in the chloroplast stroma. In terms of biological role, involved in the regulation of glutamyl-tRNA reductase (GluTR) which is important for the synthesis and distribution of 5-aminolevulinate, a precursor in heme and chlorophyll biosynthesis. Stimulates GluTR activity and regulates glutamate-1-semialdehyde release. May play a role in heme metabolism. Necessary for efficient photosynthetic electron transport in chloroplasts. The sequence is that of Glutamyl-tRNA reductase-binding protein, chloroplastic from Arabidopsis thaliana (Mouse-ear cress).